The sequence spans 366 residues: Ribosomal RNA large subunit methyltransferase M (366 aa).

Residues serine 188, 221 to 224 (CPGG), aspartate 240, aspartate 260, and aspartate 277 each bind S-adenosyl-L-methionine. The active-site Proton acceptor is lysine 306.

The protein belongs to the class I-like SAM-binding methyltransferase superfamily. RNA methyltransferase RlmE family. RlmM subfamily. Monomer.

It is found in the cytoplasm. It carries out the reaction cytidine(2498) in 23S rRNA + S-adenosyl-L-methionine = 2'-O-methylcytidine(2498) in 23S rRNA + S-adenosyl-L-homocysteine + H(+). Catalyzes the 2'-O-methylation at nucleotide C2498 in 23S rRNA. The protein is Ribosomal RNA large subunit methyltransferase M of Shigella flexneri serotype 5b (strain 8401).